The chain runs to 309 residues: Sulfate adenylyltransferase subunit 2 (309 aa).

The protein belongs to the PAPS reductase family. CysD subfamily. Heterodimer composed of CysD, the smaller subunit, and CysN.

It carries out the reaction sulfate + ATP + H(+) = adenosine 5'-phosphosulfate + diphosphate. It functions in the pathway sulfur metabolism; hydrogen sulfide biosynthesis; sulfite from sulfate: step 1/3. With CysN forms the ATP sulfurylase (ATPS) that catalyzes the adenylation of sulfate producing adenosine 5'-phosphosulfate (APS) and diphosphate, the first enzymatic step in sulfur assimilation pathway. APS synthesis involves the formation of a high-energy phosphoric-sulfuric acid anhydride bond driven by GTP hydrolysis by CysN coupled to ATP hydrolysis by CysD. This Mycolicibacterium vanbaalenii (strain DSM 7251 / JCM 13017 / BCRC 16820 / KCTC 9966 / NRRL B-24157 / PYR-1) (Mycobacterium vanbaalenii) protein is Sulfate adenylyltransferase subunit 2.